Consider the following 152-residue polypeptide: DNA-binding transcriptional activator DecR (152 aa).

The HTH asnC-type domain occupies 2 to 63 (LDKIDRKLLA…LLDPEKIGLG (62 aa)). A DNA-binding region (H-T-H motif) is located at residues 21–40 (LQALAEAVNLTTTPCWKRLK).

In terms of biological role, plays a role in L-cysteine detoxification. Binds to the dlsT(yhaO)-yhaM operon promoter in the presence but not absence of L-cysteine; activates transcription from the dlsT(yhaO)-yhaM operon. The protein is DNA-binding transcriptional activator DecR (decR) of Escherichia coli O157:H7.